Consider the following 701-residue polypeptide: Elongation factor G (701 aa).

The tr-type G domain maps to 10 to 286 (NKVRNIGIMA…AVIDYLPSPL (277 aa)). GTP-binding positions include 19 to 26 (AHIDAGKT), 83 to 87 (DTPGH), and 137 to 140 (NKMD).

The protein belongs to the TRAFAC class translation factor GTPase superfamily. Classic translation factor GTPase family. EF-G/EF-2 subfamily.

It is found in the cytoplasm. In terms of biological role, catalyzes the GTP-dependent ribosomal translocation step during translation elongation. During this step, the ribosome changes from the pre-translocational (PRE) to the post-translocational (POST) state as the newly formed A-site-bound peptidyl-tRNA and P-site-bound deacylated tRNA move to the P and E sites, respectively. Catalyzes the coordinated movement of the two tRNA molecules, the mRNA and conformational changes in the ribosome. The protein is Elongation factor G of Mycobacteroides abscessus (strain ATCC 19977 / DSM 44196 / CCUG 20993 / CIP 104536 / JCM 13569 / NCTC 13031 / TMC 1543 / L948) (Mycobacterium abscessus).